Reading from the N-terminus, the 312-residue chain is Serine protease 48 (312 aa).

The signal sequence occupies residues Met1–Thr22. Residues Ile40–Ser276 form the Peptidase S1 domain. The cysteines at positions 65 and 81 are disulfide-linked. Active-site charge relay system residues include His80 and Asp126. An N-linked (GlcNAc...) asparagine glycan is attached at Asn149. Intrachain disulfides connect Cys160/Cys235, Cys190/Cys214, and Cys225/Cys253. Residue Ser229 is the Charge relay system of the active site. The N-linked (GlcNAc...) asparagine glycan is linked to Asn263.

The protein belongs to the peptidase S1 family.

It localises to the secreted. This chain is Serine protease 48 (Prss48), found in Mus musculus (Mouse).